A 330-amino-acid chain; its full sequence is Fructose-1,6-bisphosphatase class 1 (330 aa).

Mg(2+) contacts are provided by glutamate 84, aspartate 103, leucine 105, and aspartate 106. Substrate is bound by residues 106 to 109 (DGSS), asparagine 196, and lysine 262. Glutamate 268 is a Mg(2+) binding site.

It belongs to the FBPase class 1 family. In terms of assembly, homotetramer. It depends on Mg(2+) as a cofactor.

It is found in the cytoplasm. The catalysed reaction is beta-D-fructose 1,6-bisphosphate + H2O = beta-D-fructose 6-phosphate + phosphate. It participates in carbohydrate biosynthesis; gluconeogenesis. The polypeptide is Fructose-1,6-bisphosphatase class 1 (Shewanella baltica (strain OS185)).